The chain runs to 241 residues: DNA repair protein RecO (241 aa).

It belongs to the RecO family.

In terms of biological role, involved in DNA repair and RecF pathway recombination. This is DNA repair protein RecO from Ruegeria sp. (strain TM1040) (Silicibacter sp.).